Here is a 267-residue protein sequence, read N- to C-terminus: MAKTIFYFSYRKTEELHAKAKELKKITTDYGYELTDDYQKANVIISIGGDGAFLKSVRETGFRQDCLYAGIALTEQLGQYCDFHINQLDEIIKAAIEDRWLVRRYPTIYGTVNNTKAFYVLNEFNIRSSIIRTLTMDLYINDSHFETFRGDGMVISTPTGSTAYNKSVNGSIVDPLLPSMQVSELASINNNKFRTLGSSFILSPKRKLRIEIASEEGNNEFPMIGMDSEALSIQHVHEVNLEVGDRFINIIKLPKNSFWDKVKRNFL.

Catalysis depends on Asp-50, which acts as the Proton acceptor. NAD(+)-binding positions include 50 to 51 (DG), Lys-55, 122 to 123 (NE), Arg-149, Asp-151, 162 to 167 (TAYNKS), and Ala-186.

The protein belongs to the NAD kinase family. Requires a divalent metal cation as cofactor.

The protein localises to the cytoplasm. The catalysed reaction is NAD(+) + ATP = ADP + NADP(+) + H(+). Its function is as follows. Involved in the regulation of the intracellular balance of NAD and NADP, and is a key enzyme in the biosynthesis of NADP. Catalyzes specifically the phosphorylation on 2'-hydroxyl of the adenosine moiety of NAD to yield NADP. The chain is NAD kinase 2 from Listeria monocytogenes serovar 1/2a (strain ATCC BAA-679 / EGD-e).